A 257-amino-acid chain; its full sequence is Dihydroorotate dehydrogenase B (NAD(+)), electron transfer subunit (257 aa).

Positions 2–102 (IGRERMTVAS…LGPLGNGFPL (101 aa)) constitute an FAD-binding FR-type domain. Residues 53–56 (RPLS), 70–72 (IYR), and 77–78 (GT) contribute to the FAD site. 4 residues coordinate [2Fe-2S] cluster: cysteine 221, cysteine 226, cysteine 229, and cysteine 244.

It belongs to the PyrK family. In terms of assembly, heterotetramer of 2 PyrK and 2 PyrD type B subunits. The cofactor is [2Fe-2S] cluster. It depends on FAD as a cofactor.

It functions in the pathway pyrimidine metabolism; UMP biosynthesis via de novo pathway; orotate from (S)-dihydroorotate (NAD(+) route): step 1/1. Functionally, responsible for channeling the electrons from the oxidation of dihydroorotate from the FMN redox center in the PyrD type B subunit to the ultimate electron acceptor NAD(+). This Bacillus caldolyticus protein is Dihydroorotate dehydrogenase B (NAD(+)), electron transfer subunit.